The primary structure comprises 358 residues: Chondroadherin (358 aa).

Residues 1-20 (MARALLFSLVFLAILLPALA) form the signal peptide. Positions 21 to 50 (ACPQNCHCHGDLQHVICDKVGLQKIPKVSE) constitute an LRRNT domain. A disulfide bridge links Cys22 with Cys37. LRR repeat units lie at residues 51–72 (TTKLLNLQRNNFPVLAANSFRT), 75–96 (NLVSLHLQHCNIREVAAGAFRG), 99–120 (QLIYLYLSHNDIRVLRAGAFDD), 123–144 (ELTYLYLDHNKVSELPRGLLSP), 147–168 (NLFILQLNNNKIRELRAGAFQG), 171–192 (DLRWLYLSENALSSLQPGSLDD), 195–216 (NLAKFHLDKNQLSSYPSAALSK), 219–240 (VVEELKLSHNPLKSIPDNAFQS), 244–265 (YLETLWLDNTNLEKFSDAAFSG), and 268–289 (TLKHVHLDNNRLNQLPSSFPFD). Ser143 is a glycosylation site (O-linked (GalNAc...) serine). The 49-residue stretch at 299–347 (NPWKCTCQLRGLRRWLEAKASRPDATCSSPAKFKGQRIRDTDALRSCKS) folds into the LRRCT domain. Cystine bridges form between Cys303–Cys345 and Cys305–Cys325. Positions 322–358 (DATCSSPAKFKGQRIRDTDALRSCKSPTKRSKKAGRH) are disordered. Positions 348 to 358 (PTKRSKKAGRH) are enriched in basic residues.

It belongs to the small leucine-rich proteoglycan (SLRP) family. SLRP class IV subfamily. Mostly monomeric. Interacts with collagen type II. In terms of tissue distribution, cartilage.

The protein localises to the secreted. It is found in the extracellular space. It localises to the extracellular matrix. Its function is as follows. Promotes attachment of chondrocytes, fibroblasts, and osteoblasts. This binding is mediated (at least for chondrocytes and fibroblasts) by the integrin alpha(2)beta(1). May play an important role in the regulation of chondrocyte growth and proliferation. The protein is Chondroadherin (Chad) of Mus musculus (Mouse).